Here is an 868-residue protein sequence, read N- to C-terminus: Phospholipase D delta (868 aa).

The C2 domain occupies 1–154; the sequence is MAEKVSEDVM…ASGERISGWF (154 aa). A Ca(2+)-binding site is contributed by D216. The region spanning 368 to 403 is the PLD phosphodiesterase 1 domain; it reads TLFTHHQKCVLVDTQAVGNNRKVTAFIGGLDLCDGR. Catalysis depends on residues H373, K375, and D380. H373 contacts a 1,2-diacyl-sn-glycero-3-phosphate. Ca(2+)-binding residues include H409 and H440. 2 residues coordinate a 1,2-diacyl-sn-glycero-3-phosphate: Q588 and H718. The PLD phosphodiesterase 2 domain maps to 713–740; sequence FMIYVHAKGMIVDDEYVLMGSANINQRS. Active-site residues include H718, K720, and D725. E781 serves as a coordination point for Ca(2+).

Belongs to the phospholipase D family. C2-PLD subfamily. As to quaternary structure, interacts with GAPC1 and GAPC2. Increased interaction in the presence of H(2)O(2). Ca(2+) serves as cofactor. In terms of tissue distribution, expressed in roots, leaves, stems, siliques and flowers. Strongly expressed in the vascular tissues of cotyledons and leaves under dehydration stress conditions. Expression is higher in old leaves than in young leaves. Expressed in leaves and guard cells. The isoform 2 may not be present in siliques.

The protein resides in the cell membrane. The enzyme catalyses a 1,2-diacyl-sn-glycero-3-phosphocholine + H2O = a 1,2-diacyl-sn-glycero-3-phosphate + choline + H(+). With respect to regulation, activated by free oleic acid in a dose-dependent manner and less effectively by other unsaturated fatty acids such as linoleic and linolenic acids. Not activated by the saturated fatty acids stearic and palmitic acids. PIP2 and Ca(2+) stimulate activity by promoting lipid substrate binding to the active site. Activated by H(2)O(2) and by binding to GAPC. Its function is as follows. Hydrolyzes glycerol-phospholipids at the terminal phosphodiesteric bond to generate phosphatidic acids (PA). May be involved in PA accumulation in the dehydration stress response and in the transduction of hormonal and environmental signals to the microtubules cytoskeleton. Prefers phosphatidylethanolamine to phosphatidylcholine as substrate. Involved in H(2)O(2) and abscisic acid (ABA)-induced stomatal closure. Involved in nitric oxide (NO) signaling during stomatal closure. Plays a positive role in ABA-promoted senescence. Involved in basal defense and nonhost resistance. The sequence is that of Phospholipase D delta from Arabidopsis thaliana (Mouse-ear cress).